A 79-amino-acid chain; its full sequence is RNA-binding protein KhpA (79 aa).

The KH domain occupies 30-79 (GRVLEVRVHPDDLGKVIGRNGRTARALRTVVGAIGGRGVRVDLVDVDHVR).

The protein belongs to the KhpA RNA-binding protein family.

The protein localises to the cytoplasm. It is found in the nucleoid. Its function is as follows. A probable RNA-binding protein. In Streptomyces coelicolor (strain ATCC BAA-471 / A3(2) / M145), this protein is RNA-binding protein KhpA.